The chain runs to 411 residues: Secretion apparatus protein BsaZ (411 aa).

The next 4 helical transmembrane spans lie at 28–48 (IVAL…VDLT), 80–100 (IAAP…LVQS), 137–157 (ALLY…LYHA), and 175–195 (IVLT…VLIL). The segment at 341–411 (AANRGGPPPE…APARTGDQNA (71 aa)) is disordered. Low complexity predominate over residues 370-404 (DACADNAFPDDAPPGAAAPNAGSPDGPAPDGGAPA).

The protein belongs to the type III secretion exporter family.

It localises to the cell membrane. In terms of biological role, part of the bsa type III secretion system, is involved in the intracellular replication of invading bacteria inside the host cell. Probably necessary for the lysis of the vacuole membrane and escape into the host cell cytoplasm. This Burkholderia pseudomallei (strain K96243) protein is Secretion apparatus protein BsaZ (bsaZ).